A 316-amino-acid polypeptide reads, in one-letter code: Na(+)-translocating NADH-quinone reductase subunit C (316 aa).

Residues 13–33 (WYIILFIFVLSLIAGTLLSSV) form a helical membrane-spanning segment. Threonine 280 is modified (FMN phosphoryl threonine).

The protein belongs to the NqrC family. In terms of assembly, composed of six subunits; NqrA, NqrB, NqrC, NqrD, NqrE and NqrF. FMN serves as cofactor.

It localises to the cell inner membrane. It carries out the reaction a ubiquinone + n Na(+)(in) + NADH + H(+) = a ubiquinol + n Na(+)(out) + NAD(+). NQR complex catalyzes the reduction of ubiquinone-1 to ubiquinol by two successive reactions, coupled with the transport of Na(+) ions from the cytoplasm to the periplasm. NqrA to NqrE are probably involved in the second step, the conversion of ubisemiquinone to ubiquinol. The chain is Na(+)-translocating NADH-quinone reductase subunit C from Chlamydia trachomatis serovar D (strain ATCC VR-885 / DSM 19411 / UW-3/Cx).